The following is a 516-amino-acid chain: Nondiscriminating glutamyl-tRNA synthetase EARS2, mitochondrial (516 aa).

The N-terminal 39 residues, 1-39 (MRPAFIRGKWLSRTLELATGLGRRTCSSRESGREVRVRF), are a transit peptide targeting the mitochondrion. 38–40 (RFA) lines the L-glutamate pocket. Residues 43-51 (PTGFLHLGG) carry the 'HIGH' region motif. An ATP-binding site is contributed by His48. L-glutamate-binding positions include Glu74, 226–230 (YHLAN), and Arg244. ATP contacts are provided by residues Glu247 and 282–286 (KLSKR). Positions 282-286 (KLSKR) match the 'KMSKS' region motif.

This sequence belongs to the class-I aminoacyl-tRNA synthetase family. Glutamate--tRNA ligase type 1 subfamily.

The protein resides in the mitochondrion matrix. The enzyme catalyses tRNA(Glx) + L-glutamate + ATP = L-glutamyl-tRNA(Glx) + AMP + diphosphate. The catalysed reaction is tRNA(Glu) + L-glutamate + ATP = L-glutamyl-tRNA(Glu) + AMP + diphosphate. It catalyses the reaction tRNA(Gln) + L-glutamate + ATP = L-glutamyl-tRNA(Gln) + AMP + diphosphate. In terms of biological role, non-discriminating glutamyl-tRNA synthetase that catalyzes aminoacylation of both mitochondrial tRNA(Glu) and tRNA(Gln) and participates in RNA aminoacylation for mitochondrial protein translation. Attachs glutamate to tRNA(Glu) or tRNA(Gln) in a two-step reaction: glutamate is first activated by ATP to form Glu-AMP and then transferred to the acceptor end of tRNA(Glu) or tRNA(Gln). The polypeptide is Nondiscriminating glutamyl-tRNA synthetase EARS2, mitochondrial (Xenopus tropicalis (Western clawed frog)).